Consider the following 40-residue polypeptide: Photosystem II reaction center protein J (40 aa).

A helical membrane pass occupies residues 8-28 (IPLWLIGTVTGIPVIGSIGIF).

It belongs to the PsbJ family. As to quaternary structure, PSII is composed of 1 copy each of membrane proteins PsbA, PsbB, PsbC, PsbD, PsbE, PsbF, PsbH, PsbI, PsbJ, PsbK, PsbL, PsbM, PsbT, PsbX, PsbY, PsbZ, Psb30/Ycf12, at least 3 peripheral proteins of the oxygen-evolving complex and a large number of cofactors. It forms dimeric complexes.

Its subcellular location is the plastid. The protein resides in the chloroplast thylakoid membrane. Its function is as follows. One of the components of the core complex of photosystem II (PSII). PSII is a light-driven water:plastoquinone oxidoreductase that uses light energy to abstract electrons from H(2)O, generating O(2) and a proton gradient subsequently used for ATP formation. It consists of a core antenna complex that captures photons, and an electron transfer chain that converts photonic excitation into a charge separation. The sequence is that of Photosystem II reaction center protein J from Chloranthus spicatus (Chulantree).